The primary structure comprises 892 residues: DNA mismatch repair protein MutS (892 aa).

607–614 (GPNMSGKS) provides a ligand contact to ATP. A disordered region spans residues 826–854 (ETKAETEEESQLSFFGGEQSSKKQDKPVL). Positions 845-854 (SSKKQDKPVL) are enriched in basic and acidic residues.

It belongs to the DNA mismatch repair MutS family.

In terms of biological role, this protein is involved in the repair of mismatches in DNA. It is possible that it carries out the mismatch recognition step. This protein has a weak ATPase activity. In Bacillus cereus (strain AH187), this protein is DNA mismatch repair protein MutS.